Consider the following 653-residue polypeptide: MAHTHLGRAVKNIEAPRPLKTQSRSSLKNSYLVIEELIQLIDNVTVGLQSCNTTPESITLLLHNLRVHGPQLEAVSKDTLDRAFVVFRNASQDERLNITTRLKLLELIELRAKSWDNDDTIAYYKSKQQISNVELPSEYQYDAGVQPGAFSTSPTFGVSGGVGGVNDGAAAAAAAVFNAASAAAAAQAAAIAAVGTSNQQHMLLPPGEVIRNSGKFPKPTKIPGKTYCKDEVVIRNADSGKVMGIKGRRVHMIEELSETIISFQRVNPGAKERLVQITGPAEDKINYAKQLMEDTIRRNASPVRLEPAPAVGGSCSSLNSSNSDDAIVQPRTPTGSSLANRLSFNSAQNFMTATAAAQQISQQMHHQTHHLQHQQQQQVAAVAAAAAAAAHAQATAAAGKVLRPNQQLLMHSYSTNDASVGEYKFTVNVGQHLIKITGDCCELVRVAKLVLDDYFSSSEFLASIEAGAAFDGTSLVTTPSTPLPGAGPPQFWLPGTDSGIGLNCVVSSSANNNGEGDDEVFAEPSNGGSSTSNQNGLARSRRSHFSRKESTPETKGAREKGDLDDLAGTNSLKSNASRVSYDIEHLLYYSMSPHSWTLPTDWQKMQETAPSILRNKDLQDESQRFDGDKYLASIKTAAKRDIVAADEVETLDE.

A KH domain is found at 227 to 292; sequence YCKDEVVIRN…DKINYAKQLM (66 aa). 2 disordered regions span residues 311-335 and 515-570; these read VGGS…TPTG and EGDD…AGTN. Low complexity-rich tracts occupy residues 314–323 and 525–536; these read SCSSLNSSNS and SNGGSSTSNQNG. Basic and acidic residues predominate over residues 546–563; it reads SRKESTPETKGAREKGDL.

As to quaternary structure, interacts with eukaryotic translation initiation factor eIF4E1. Also interacts with eukaryotic translation initiation factor 3 complex members eif3-S9/eif3b, Int6/eif3e and eIF-3p40/eif3h and with CG3225.

Its subcellular location is the cytoplasm. The protein resides in the cytoplasmic ribonucleoprotein granule. In terms of biological role, plays a role in promoting translation. This Drosophila melanogaster (Fruit fly) protein is Eukaryotic translation initiation factor 4E-binding protein Mextli.